The sequence spans 437 residues: MKKTHITEQKFADLGLKPQVTEGLEKKGFEYCTPIQALALPVLLTGQDIAGQAQTGTGKTLAFLTATFNHLLTTPEHEGRKPTQPRAIIMAPTRELAIQIFNDAAPLIASTGLKAALAYGGESYDKQLAKLQDGVDILIGTTGRIIDFYKQRVFNLNNIQAVVLDEADRMFDLGFIKDIRFLFRRMPEPKERLNMLFSATLSYRVQELAFEHMHNPEHVVVEPEQKTGHRIQEELFYPSNEDKMALLQTLIEEEWPDRAIVFANTKHKCESIWGHLAADGHRVGLLTGDVPQKKREKILEQFTRGEVDLLVATDVAARGLHIPQVTHVFNFDLPDDCEDYVHRIGRTGRAGASGHSISFACEDYAINLPPIEEYIEHAIPVSDYDASALIQDLPAPLRMRAPRTQQRRTNTGGTRSGNRKPQGRRPRQPRQSAPKQS.

Residues 9-37 (QKFADLGLKPQVTEGLEKKGFEYCTPIQA) carry the Q motif motif. In terms of domain architecture, Helicase ATP-binding spans 40 to 219 (LPVLLTGQDI…FEHMHNPEHV (180 aa)). 53 to 60 (AQTGTGKT) serves as a coordination point for ATP. Residues 165–168 (DEAD) carry the DEAD box motif. Residues 245–390 (ALLQTLIEEE…VSDYDASALI (146 aa)) form the Helicase C-terminal domain. A disordered region spans residues 395–437 (APLRMRAPRTQQRRTNTGGTRSGNRKPQGRRPRQPRQSAPKQS). Over residues 403–413 (RTQQRRTNTGG) the composition is skewed to low complexity. The segment covering 417–428 (GNRKPQGRRPRQ) has biased composition (basic residues).

It belongs to the DEAD box helicase family. RhlB subfamily. In terms of assembly, component of the RNA degradosome, which is a multiprotein complex involved in RNA processing and mRNA degradation.

It is found in the cytoplasm. The catalysed reaction is ATP + H2O = ADP + phosphate + H(+). DEAD-box RNA helicase involved in RNA degradation. Has RNA-dependent ATPase activity and unwinds double-stranded RNA. This Vibrio campbellii (strain ATCC BAA-1116) protein is ATP-dependent RNA helicase RhlB.